The primary structure comprises 518 residues: Flagellin (518 aa).

This sequence belongs to the bacterial flagellin family.

Its subcellular location is the secreted. The protein resides in the bacterial flagellum. Flagellin is the subunit protein which polymerizes to form the filaments of bacterial flagella. This Aquifex aeolicus (strain VF5) protein is Flagellin (flaA).